Here is a 299-residue protein sequence, read N- to C-terminus: tRNA dimethylallyltransferase (299 aa).

13–20 is a binding site for ATP; that stretch reads GPTASGKT. 15–20 contacts substrate; sequence TASGKT. The tract at residues 38–41 is interaction with substrate tRNA; sequence DSRQ.

The protein belongs to the IPP transferase family. In terms of assembly, monomer. Mg(2+) serves as cofactor.

The catalysed reaction is adenosine(37) in tRNA + dimethylallyl diphosphate = N(6)-dimethylallyladenosine(37) in tRNA + diphosphate. Its function is as follows. Catalyzes the transfer of a dimethylallyl group onto the adenine at position 37 in tRNAs that read codons beginning with uridine, leading to the formation of N6-(dimethylallyl)adenosine (i(6)A). The chain is tRNA dimethylallyltransferase from Prochlorococcus marinus (strain MIT 9211).